The sequence spans 135 residues: Holo-[acyl-carrier-protein] synthase (135 aa).

2 residues coordinate Mg(2+): Asp9 and Glu63.

The protein belongs to the P-Pant transferase superfamily. AcpS family. Requires Mg(2+) as cofactor.

Its subcellular location is the cytoplasm. The catalysed reaction is apo-[ACP] + CoA = holo-[ACP] + adenosine 3',5'-bisphosphate + H(+). Its function is as follows. Transfers the 4'-phosphopantetheine moiety from coenzyme A to a Ser of acyl-carrier-protein. This chain is Holo-[acyl-carrier-protein] synthase, found in Paraburkholderia phymatum (strain DSM 17167 / CIP 108236 / LMG 21445 / STM815) (Burkholderia phymatum).